The primary structure comprises 144 residues: Large ribosomal subunit protein uL16 (144 aa).

Over residues 1 to 19 the composition is skewed to basic residues; the sequence is MLLPKRVKYRRQHRPKTTG. The interval 1 to 26 is disordered; it reads MLLPKRVKYRRQHRPKTTGRSKGGNE.

It belongs to the universal ribosomal protein uL16 family. In terms of assembly, part of the 50S ribosomal subunit.

Binds 23S rRNA and is also seen to make contacts with the A and possibly P site tRNAs. In Macrococcus caseolyticus (strain JCSC5402) (Macrococcoides caseolyticum), this protein is Large ribosomal subunit protein uL16.